A 619-amino-acid chain; its full sequence is DEAD-box ATP-dependent RNA helicase 14 (619 aa).

Residue Ala-2 is modified to N-acetylalanine. The region spanning 17–51 (HTLPKPWKGLIDDRTGYLYFWNPETNVTQYEKPTP) is the WW domain. The tract at residues 47–139 (EKPTPSLPPK…APASELSPEA (93 aa)) is disordered. Low complexity predominate over residues 61–71 (VSVSSSVQVQQ). Basic and acidic residues predominate over residues 78 to 93 (PKDDDKYSRGSERVSR). Residues 125–139 (PLPSSAPASELSPEA) show a composition bias toward low complexity. Ser-136 is subject to Phosphoserine. A Q motif motif is present at residues 158-186 (MSFEATGFPPELLREVLSAGFSAPTPIQA). Residues 189-363 (WPIAMQGRDI…ADLLVNPAQV (175 aa)) form the Helicase ATP-binding domain. 202–209 (AKTGSGKT) is a binding site for ATP. A DEAD box motif is present at residues 311–314 (DEAD). The region spanning 392–536 (RLEQILRSQE…RVPPQIREMA (145 aa)) is the Helicase C-terminal domain. The segment at 528–619 (VPPQIREMAT…FHETMMMKHR (92 aa)) is disordered. Over residues 552–568 (PSGGRGRGGDSGYGGRG) the composition is skewed to gly residues. Composition is skewed to basic and acidic residues over residues 582 to 595 (GRERERSRSPERFN) and 609 to 619 (SFHETMMMKHR).

It belongs to the DEAD box helicase family. DDX5/DBP2 subfamily. In terms of tissue distribution, ubiquitous. Preferentially expressed in flowers and roots.

It is found in the nucleus. It carries out the reaction ATP + H2O = ADP + phosphate + H(+). Its function is as follows. ATP-dependent RNA helicase involved nonsense-mediated mRNA decay and ribosome biogenesis through rRNA processing. This Arabidopsis thaliana (Mouse-ear cress) protein is DEAD-box ATP-dependent RNA helicase 14 (RH14).